The following is a 212-amino-acid chain: ATP-dependent Clp protease proteolytic subunit 2 (212 aa).

Positions 1–20 (MSHNTSIASQGMPAMAGPET) are disordered. Catalysis depends on S107, which acts as the Nucleophile. The active site involves H132.

This sequence belongs to the peptidase S14 family. As to quaternary structure, fourteen ClpP subunits assemble into 2 heptameric rings which stack back to back to give a disk-like structure with a central cavity, resembling the structure of eukaryotic proteasomes.

The protein localises to the cytoplasm. The catalysed reaction is Hydrolysis of proteins to small peptides in the presence of ATP and magnesium. alpha-casein is the usual test substrate. In the absence of ATP, only oligopeptides shorter than five residues are hydrolyzed (such as succinyl-Leu-Tyr-|-NHMec, and Leu-Tyr-Leu-|-Tyr-Trp, in which cleavage of the -Tyr-|-Leu- and -Tyr-|-Trp bonds also occurs).. Functionally, cleaves peptides in various proteins in a process that requires ATP hydrolysis. Has a chymotrypsin-like activity. Plays a major role in the degradation of misfolded proteins. The protein is ATP-dependent Clp protease proteolytic subunit 2 of Cutibacterium acnes (strain DSM 16379 / KPA171202) (Propionibacterium acnes).